We begin with the raw amino-acid sequence, 208 residues long: Ras-related protein Rab6 (208 aa).

Residue 19–27 (GEQSVGKTS) coordinates GTP. The Effector region motif lies at 41–49 (YQATIGIDF). GTP is bound by residues 67-71 (DTAGQ), 125-128 (NKTD), and 155-157 (SAK). Residues 176 to 208 (MDSTENKPSEDMQEVVLKDSPNETKDPEGGCAC) are disordered. Basic and acidic residues predominate over residues 179-208 (TENKPSEDMQEVVLKDSPNETKDPEGGCAC).

This sequence belongs to the small GTPase superfamily. Rab family. As to quaternary structure, interacts with Rich and Act5C. Interacts with BicD (via C-terminal domain). Interacts (in GTP-bound) with GCC1/CG10703 and cbs. Interacts with Gorab (via C-terminus); binds to a Gorab homodimer, this interaction seems to be required for trans-Golgi localization of Gorab. In terms of tissue distribution, expressed in larval eye, wing and leg imaginal disks and in salivary gland. Expressed in the larval optic lobe, showing an enrichment in the neuropil. In the adult brain, expressed in photoreceptors and mushroom body.

The protein localises to the golgi apparatus membrane. The protein resides in the synapse. It localises to the perikaryon. Protein transport. Regulator of membrane traffic from the Golgi apparatus towards the endoplasmic reticulum (ER). Mediates membrane trafficking during egg chamber growth and organization, possibly upstream of exocyst component Sec5. Also during oogenesis, plays a role, together with BicD but independently of Sec5, in the polarization of the oocyte microtubule cytoskeleton, in the localization of oskar mRNA and in the anterodorsal secretion of grk. Required for anterograde opsin transport through the ER-Golgi complex. Plays a role, together with Rich, in regulating CadN transport in photoreceptor cells which is required for the formation of normal synaptic connections between axons from the inner photoreceptor cells in the eye and postsynaptic cells in the brain medulla layer M6. Necessary for proper development of bristle shafts of macrochaete and microchaete on the head, thorax and scutellum. Modulates Notch signaling. As a key regulator of vesicular traffic, plays a critical role in the regulation of actin organization and is required for normal rates of phagocytic uptake during phagocytosis involved in defense against viral and fungal infection. The chain is Ras-related protein Rab6 from Drosophila melanogaster (Fruit fly).